A 370-amino-acid polypeptide reads, in one-letter code: Anhydro-N-acetylmuramic acid kinase (370 aa).

An ATP-binding site is contributed by 12-19 (GTSLDGVD).

This sequence belongs to the anhydro-N-acetylmuramic acid kinase family.

The enzyme catalyses 1,6-anhydro-N-acetyl-beta-muramate + ATP + H2O = N-acetyl-D-muramate 6-phosphate + ADP + H(+). It participates in amino-sugar metabolism; 1,6-anhydro-N-acetylmuramate degradation. It functions in the pathway cell wall biogenesis; peptidoglycan recycling. Functionally, catalyzes the specific phosphorylation of 1,6-anhydro-N-acetylmuramic acid (anhMurNAc) with the simultaneous cleavage of the 1,6-anhydro ring, generating MurNAc-6-P. Is required for the utilization of anhMurNAc either imported from the medium or derived from its own cell wall murein, and thus plays a role in cell wall recycling. The sequence is that of Anhydro-N-acetylmuramic acid kinase from Yersinia pseudotuberculosis serotype O:1b (strain IP 31758).